Here is a 179-residue protein sequence, read N- to C-terminus: Protein TIFY 11a (179 aa).

Positions 62-97 (VDGGGQQFTIFYAGKVVVIDRCTPAMAAELMRFASA) constitute a Tify domain. Positions 115–140 (PIARKASLKRFLAKRKATPASARSSY) match the Jas motif. The Nuclear localization signal motif lies at 117–124 (ARKASLKR).

The protein belongs to the TIFY/JAZ family. As to quaternary structure, interacts with BHLH148. Interacts with COI1A in a coronatine-dependent manner. Interacts with COI1B in a coronatine-dependent manner. Coronatine is an analog of jasmonoyl isoleucine (JA-Ile). Interacts with RSS3. Forms a ternary complex with RSS3 and BHLH094 in the nucleus. Interacts with BHLH062 and NINJA1. Interacts with MYB30. Ubiquitinated. Targeted for degradation by the SCF(COI1) E3 ubiquitin ligase-proteasome pathway during jasmonate signaling.

The protein localises to the nucleus. Repressor of jasmonate (JA) responses. Forms a ternary complex with RSS3 and BHLH94 to negatively regulate JA-responsive genes. Acts as a positive regulator of tolerance to salt stress. Involved in salt tolerance by modulating potassium homeostasis through JA signaling and regulation of the expression of potassium ion transporter genes. Acts as a transcriptional regulator targeted by the SCF(COI1) E3 ubiquitin ligase complexes in the JA signaling pathway, and interacts with BHLH062 that may directly regulate the ion transporter genes. Acts as a positive regulator of tolerance to dehydration stress. Acts as a negative regulator of tolerance to cold stress by interacting with MYB30. The protein is Protein TIFY 11a of Oryza sativa subsp. japonica (Rice).